Reading from the N-terminus, the 426-residue chain is Tachykinins (426 aa).

Residues 1 to 116 (MQCDFRVHQD…IEDNLSHEFE (116 aa)) constitute a propeptide that is removed on maturation. Arginine amide is present on Arg-127. A propeptide spanning residues 131–145 (GYLTPDFEDSYFRDE) is cleaved from the precursor. The residue at position 156 (Arg-156) is an Arginine amide. Residues 160–167 (VVSDDDYY) constitute a propeptide that is removed on maturation. An Arginine amide modification is found at Arg-178. The propeptide occupies 182-235 (SLEEVLGEIEKKAAMDYYDTRDKKTYVFEYPEDYEKRLLASIRGKLKEFPMEWE). Arg-246 is modified (arginine amide). Residues 250–259 (SLLDEIEELE) constitute a propeptide that is removed on maturation. Arginine amide is present on Arg-270. Residues 274–291 (NALENYIDYYLDPDMDFD) constitute a propeptide that is removed on maturation. The segment at 299 to 329 (QGMRGKKDSDKRAPMGFQGMRGKRNTGQRFD) is disordered. Arg-302 bears the Arginine amide mark. A propeptide spanning residues 306-308 (DSD) is cleaved from the precursor. Arginine amide is present on Arg-319. Positions 323-358 (NTGQRFDTGINFNIRSSNEYQGTNNRRNALASCQLE) are excised as a propeptide. Residues Arg-369 and Arg-386 each carry the arginine amide modification. The propeptide occupies 390 to 426 (WATAPYEDDSPFISVFDNTERIGVDGDSPAILGNSIS).

Belongs to the tachykinin family. Tachykinins (TK) are expressed throughout the nervous system. APMGFQGMR-amide is also expressed in the retrocerebral complex (at protein level).

The protein localises to the secreted. In terms of biological role, tachykinins are active peptides which excite neurons, evoke behavioral responses, are potent vasodilators and secretagogues, and contract (directly or indirectly) many smooth muscles. The protein is Tachykinins of Camponotus floridanus (Florida carpenter ant).